A 447-amino-acid polypeptide reads, in one-letter code: Sporulation protein YpeB (447 aa).

The protein belongs to the YpeB family.

In terms of biological role, required for spore cortex hydrolysis during germination. Appears to be required for either expression, localization, activation or function of SleB. This chain is Sporulation protein YpeB, found in Halalkalibacterium halodurans (strain ATCC BAA-125 / DSM 18197 / FERM 7344 / JCM 9153 / C-125) (Bacillus halodurans).